Here is a 446-residue protein sequence, read N- to C-terminus: Exodeoxyribonuclease 7 large subunit (446 aa).

The protein belongs to the XseA family. Heterooligomer composed of large and small subunits.

The protein resides in the cytoplasm. The enzyme catalyses Exonucleolytic cleavage in either 5'- to 3'- or 3'- to 5'-direction to yield nucleoside 5'-phosphates.. Its function is as follows. Bidirectionally degrades single-stranded DNA into large acid-insoluble oligonucleotides, which are then degraded further into small acid-soluble oligonucleotides. This chain is Exodeoxyribonuclease 7 large subunit, found in Streptococcus pneumoniae (strain ATCC BAA-255 / R6).